A 142-amino-acid polypeptide reads, in one-letter code: Large ribosomal subunit protein bL17 (142 aa).

The protein belongs to the bacterial ribosomal protein bL17 family. In terms of assembly, part of the 50S ribosomal subunit. Contacts protein L32.

The chain is Large ribosomal subunit protein bL17 from Wolbachia pipientis subsp. Culex pipiens (strain wPip).